The chain runs to 163 residues: Neurotrophin-3 (163 aa).

An N-terminal signal peptide occupies residues I1–S3. Residues T4–R119 constitute a propeptide that is removed on maturation. Residues K35 to Q61 form a disordered region. N112 is a glycosylation site (N-linked (GlcNAc...) asparagine).

The protein belongs to the NGF-beta family.

The protein resides in the secreted. Its function is as follows. Seems to promote the survival of visceral and proprioceptive sensory neurons. The chain is Neurotrophin-3 (NTF3) from Corallus caninus (Emerald tree boa).